A 322-amino-acid chain; its full sequence is Mas-related G-protein coupled receptor member B5 (322 aa).

Topologically, residues 1-34 (MGLTTPAWNINNTVVNGSNNTEHFSCVSKFNTLN) are extracellular. N-linked (GlcNAc...) asparagine glycosylation is found at Asn-11, Asn-16, and Asn-19. The helical transmembrane segment at 35 to 55 (FLTVIIAMFGLAGNAIVLWLL) threads the bilayer. Topologically, residues 56 to 70 (AFHLPRNAFSVYVCN) are cytoplasmic. A helical membrane pass occupies residues 71–91 (LACADFLQLCTQILGSLECFL). Residues 92-98 (QLNRRHT) are Extracellular-facing. A helical transmembrane segment spans residues 99-119 (FFLTVVFMFAYLAGLCMIAAI). At 120-147 (SVERSLSVMWPIWYHCQRPRHTSSIMCA) the chain is on the cytoplasmic side. A helical transmembrane segment spans residues 148-168 (LLWAFCLLLNFLLGEGCGLLF). Over 169 to 172 (SDPK) the chain is Extracellular. The chain crosses the membrane as a helical span at residues 173 to 193 (YYFCITCALITTALIILLTVV). Residues 194–216 (PSVSSLALLVKMICGSHRIPVTR) lie on the Cytoplasmic side of the membrane. A helical membrane pass occupies residues 217 to 237 (FYVTIALTLVVFIFLGLPFGI). The Extracellular segment spans residues 238 to 260 (YSSFLIMFKEFQSIFSYHVLEVT). A helical transmembrane segment spans residues 261-281 (IFLSCVNSCANPIIYFLVGSI). The Cytoplasmic portion of the chain corresponds to 282 to 322 (RQHRLQWQSLKLLLQRAMQDTPEEDSGERVPSQRSGELESV). Residues 302 to 322 (TPEEDSGERVPSQRSGELESV) form a disordered region.

It belongs to the G-protein coupled receptor 1 family. Mas subfamily.

Its subcellular location is the membrane. Functionally, orphan receptor. Probably involved in the function of nociceptive neurons. May regulate nociceptor function and/or development, including the sensation or modulation of pain. The chain is Mas-related G-protein coupled receptor member B5 (Mrgprb5) from Mus musculus (Mouse).